Reading from the N-terminus, the 1409-residue chain is DNA-directed RNA polymerase subunit beta' (1409 aa).

Cysteine 70, cysteine 72, cysteine 85, and cysteine 88 together coordinate Zn(2+). Mg(2+)-binding residues include aspartate 460, aspartate 462, and aspartate 464. Residues cysteine 814, cysteine 888, cysteine 895, and cysteine 898 each contribute to the Zn(2+) site.

Belongs to the RNA polymerase beta' chain family. In terms of assembly, the RNAP catalytic core consists of 2 alpha, 1 beta, 1 beta' and 1 omega subunit. When a sigma factor is associated with the core the holoenzyme is formed, which can initiate transcription. Mg(2+) is required as a cofactor. Zn(2+) serves as cofactor.

It carries out the reaction RNA(n) + a ribonucleoside 5'-triphosphate = RNA(n+1) + diphosphate. Its function is as follows. DNA-dependent RNA polymerase catalyzes the transcription of DNA into RNA using the four ribonucleoside triphosphates as substrates. The polypeptide is DNA-directed RNA polymerase subunit beta' (Shewanella violacea).